Here is a 376-residue protein sequence, read N- to C-terminus: DNA replication and repair protein RecF (376 aa).

Glycine 30–serine 37 is an ATP binding site.

It belongs to the RecF family.

The protein resides in the cytoplasm. The RecF protein is involved in DNA metabolism; it is required for DNA replication and normal SOS inducibility. RecF binds preferentially to single-stranded, linear DNA. It also seems to bind ATP. This chain is DNA replication and repair protein RecF, found in Nostoc sp. (strain PCC 7120 / SAG 25.82 / UTEX 2576).